The primary structure comprises 84 residues: MPKAHPKCEILEPSELLTFTKSSSYSSYFFARLCAIVQSICCTIRVCAIILIDYRLLVFTIGPHHKINGERWILNFPPSVKVCL.

This is an uncharacterized protein from Schizosaccharomyces pombe (strain 972 / ATCC 24843) (Fission yeast).